A 284-amino-acid chain; its full sequence is Homeobox protein SIX1 (284 aa).

Positions 124 to 183 (GEETSYCFKEKSRGVLREWYAHNPYPSPREKRELAEATGLTTTQVSNWFKNRRQRDRAAE) form a DNA-binding region, homeobox. Positions 168 to 271 (VSNWFKNRRQ…AHQHQLQDSL (104 aa)) are disordered. Over residues 179-190 (DRAAEAKERENT) the composition is skewed to basic and acidic residues. Positions 242–271 (RSSNYSLPGLTASQPSHGLQAHQHQLQDSL) are enriched in polar residues.

Belongs to the SIX/Sine oculis homeobox family. As to quaternary structure, interacts with DACH1. Interacts with EYA1. Interacts with EYA2. Interacts with CDH1. Interacts with TBX18. Interacts with CEBPA. Interacts with CEBPB. Interacts with EBF2. Phosphorylated during interphase; becomes hyperphosphorylated during mitosis. Hyperphosphorylation impairs binding to promoter elements. In terms of processing, ubiquitinated by the anaphase promoting complex (APC), leading to its proteasomal degradation.

It localises to the nucleus. The protein localises to the cytoplasm. Its function is as follows. Transcription factor that is involved in the regulation of cell proliferation, apoptosis and embryonic development. Plays an important role in the development of several organs, including kidney, muscle and inner ear. Depending on context, functions as a transcriptional repressor or activator. Lacks an activation domain, and requires interaction with EYA family members for transcription activation. Mediates nuclear translocation of EYA1 and EYA2. Binds the 5'-TCA[AG][AG]TTNC-3' motif present in the MEF3 element in the MYOG promoter and CIDEA enhancer. Regulates the expression of numerous genes, including MYC, CCNA1, CCND1 and EZR. Acts as an activator of the IGFBP5 promoter, probably coactivated by EYA2. Repression of precursor cell proliferation in myoblasts is switched to activation through recruitment of EYA3 to the SIX1-DACH1 complex. During myogenesis, seems to act together with EYA2 and DACH2. Regulates the expression of CCNA1. Promotes brown adipocyte differentiation. In Lagothrix lagotricha (Brown woolly monkey), this protein is Homeobox protein SIX1 (SIX1).